A 106-amino-acid chain; its full sequence is Protein RnfH (106 aa).

Belongs to the UPF0125 (RnfH) family.

This Ectopseudomonas mendocina (strain ymp) (Pseudomonas mendocina) protein is Protein RnfH.